Reading from the N-terminus, the 291-residue chain is Bis(5'-nucleosyl)-tetraphosphatase, symmetrical (291 aa).

This sequence belongs to the Ap4A hydrolase family.

It carries out the reaction P(1),P(4)-bis(5'-adenosyl) tetraphosphate + H2O = 2 ADP + 2 H(+). Hydrolyzes diadenosine 5',5'''-P1,P4-tetraphosphate to yield ADP. The sequence is that of Bis(5'-nucleosyl)-tetraphosphatase, symmetrical from Coxiella burnetii (strain CbuG_Q212) (Coxiella burnetii (strain Q212)).